Consider the following 389-residue polypeptide: Urotensin-2 receptor (389 aa).

Positions Met-1–Ser-10 are enriched in polar residues. The segment at Met-1 to Pro-39 is disordered. The Extracellular segment spans residues Met-1–Ile-54. 2 N-linked (GlcNAc...) asparagine glycosylation sites follow: Asn-29 and Asn-33. The span at Ala-30–Pro-39 shows a compositional bias: polar residues. The helical transmembrane segment at Gly-55–Cys-77 threads the bilayer. The Cytoplasmic portion of the chain corresponds to Arg-78–Tyr-87. Residues Val-88–Thr-113 form a helical membrane-spanning segment. Residues Lys-114 to Arg-124 are Extracellular-facing. A disulfide bridge connects residues Cys-123 and Cys-199. A helical transmembrane segment spans residues Val-125–Ser-146. Over Glu-147–Lys-167 the chain is Cytoplasmic. The helical transmembrane segment at Leu-168–Leu-186 threads the bilayer. The Extracellular segment spans residues Ala-187–Arg-209. A helical transmembrane segment spans residues Ala-210–Ala-232. The Cytoplasmic segment spans residues Arg-233–Arg-258. Residues Leu-259–His-284 traverse the membrane as a helical segment. Over Gln-285–Asn-297 the chain is Extracellular. A helical membrane pass occupies residues Tyr-298–Leu-318. Over Thr-319 to Ala-389 the chain is Cytoplasmic. The interval Gly-328–Ala-389 is disordered. Positions Arg-331–Gly-340 are enriched in gly residues. Residues Ser-355–Asp-368 show a composition bias toward polar residues. A compositionally biased stretch (pro residues) spans Pro-377–Ala-389.

Belongs to the G-protein coupled receptor 1 family. In terms of tissue distribution, most abundant expression in the heart and pancreas.

It is found in the cell membrane. In terms of biological role, high affinity receptor for urotensin-2 and urotensin-2B. The activity of this receptor is mediated by a G-protein that activate a phosphatidylinositol-calcium second messenger system. The protein is Urotensin-2 receptor (UTS2R) of Homo sapiens (Human).